Reading from the N-terminus, the 257-residue chain is UPF0246 protein swp_3736 (257 aa).

This sequence belongs to the UPF0246 family.

This is UPF0246 protein swp_3736 from Shewanella piezotolerans (strain WP3 / JCM 13877).